Here is a 61-residue protein sequence, read N- to C-terminus: Neurotoxin-like protein 1 (61 aa).

4 cysteine pairs are disulfide-bonded: C3-C24, C17-C38, C42-C53, and C54-C59.

As to expression, expressed by the venom gland.

Its subcellular location is the secreted. This chain is Neurotoxin-like protein 1, found in Causus rhombeatus (Rhombic night adder).